The primary structure comprises 53 residues: Large ribosomal subunit protein bL33A (53 aa).

It belongs to the bacterial ribosomal protein bL33 family.

The chain is Large ribosomal subunit protein bL33A (rpmG1) from Mycoplasma genitalium (strain ATCC 33530 / DSM 19775 / NCTC 10195 / G37) (Mycoplasmoides genitalium).